The primary structure comprises 493 residues: Tripartite motif-containing protein 5 (493 aa).

The residue at position 2 (A2) is an N-acetylalanine. The segment at 15–59 (CPICLELLTQPLSLDCGHSFCQACLTANHKKSTLDKGERSCPVCR) adopts an RING-type zinc-finger fold. Residue S86 is modified to Phosphoserine. A B box-type zinc finger spans residues 90–132 (QKVDHCARHGEKLLLFCKEDGKVICWLCERSQEHRGHHTFLTE). Residues C95, H98, C117, and H123 each contribute to the Zn(2+) site. A coiled-coil region spans residues 131–223 (TEEVAQKYQV…LTKSETEMVQ (93 aa)). Residues 185–198 (FEQLRDILDWEESN) form a required for interaction with GABARAP and for autophagy region. In terms of domain architecture, B30.2/SPRY spans 281–493 (LKGMLEVFRE…VPMTLCSPSS (213 aa)).

Belongs to the TRIM/RBCC family. Can form homodimers and homotrimers. In addition to lower-order dimerization, also exhibits a higher-order multimerization and both low- and high-order multimerizations are essential for its restriction activity. Interacts with BTBD1 and BTBD2. Interacts with PSMC4, PSMC5, PSMD7 and HSPA8/HSC70. Interacts (via B30.2/SPRY domain) with HSPA1A/B. Interacts with PSMC2, MAP3K7/TAK1, TAB2 and TAB3. Interacts with SQSTM1. Interacts with TRIM6 and TRIM34. Interacts with ULK1 (phosphorylated form), GABARAP, GABARAPL1, GABARAPL2, MAP1LC3A, MAP1LC3C and BECN1. Post-translationally, degraded in a proteasome-independent fashion in the absence of viral infection but in a proteasome-dependent fashion following exposure to restriction sensitive virus. In terms of processing, autoubiquitinated in a RING finger- and UBE2D2-dependent manner. Monoubiquitinated by TRIM21. Deubiquitinated by Yersinia YopJ. Ubiquitination may not lead to proteasomal degradation.

Its subcellular location is the cytoplasm. It is found in the nucleus. It catalyses the reaction S-ubiquitinyl-[E2 ubiquitin-conjugating enzyme]-L-cysteine + [acceptor protein]-L-lysine = [E2 ubiquitin-conjugating enzyme]-L-cysteine + N(6)-ubiquitinyl-[acceptor protein]-L-lysine.. It participates in protein modification; protein ubiquitination. Functionally, capsid-specific restriction factor that prevents infection from non-host-adapted retroviruses. Blocks viral replication early in the life cycle, after viral entry but before reverse transcription. In addition to acting as a capsid-specific restriction factor, also acts as a pattern recognition receptor that activates innate immune signaling in response to the retroviral capsid lattice. Binding to the viral capsid triggers its E3 ubiquitin ligase activity, and in concert with the heterodimeric ubiquitin conjugating enzyme complex UBE2V1-UBE2N (also known as UBC13-UEV1A complex) generates 'Lys-63'-linked polyubiquitin chains, which in turn are catalysts in the autophosphorylation of the MAP3K7/TAK1 complex (includes TAK1, TAB2, and TAB3). Activation of the MAP3K7/TAK1 complex by autophosphorylation results in the induction and expression of NF-kappa-B and MAPK-responsive inflammatory genes, thereby leading to an innate immune response in the infected cell. Plays a role in regulating autophagy through activation of autophagy regulator BECN1 by causing its dissociation from its inhibitors BCL2 and TAB2. This chain is Tripartite motif-containing protein 5 (TRIM5), found in Pongo pygmaeus (Bornean orangutan).